Reading from the N-terminus, the 313-residue chain is Porphobilinogen deaminase (313 aa).

Cysteine 242 carries the S-(dipyrrolylmethanemethyl)cysteine modification.

Belongs to the HMBS family. In terms of assembly, monomer. Dipyrromethane is required as a cofactor.

The catalysed reaction is 4 porphobilinogen + H2O = hydroxymethylbilane + 4 NH4(+). It participates in porphyrin-containing compound metabolism; protoporphyrin-IX biosynthesis; coproporphyrinogen-III from 5-aminolevulinate: step 2/4. In terms of biological role, tetrapolymerization of the monopyrrole PBG into the hydroxymethylbilane pre-uroporphyrinogen in several discrete steps. The protein is Porphobilinogen deaminase of Salmonella arizonae (strain ATCC BAA-731 / CDC346-86 / RSK2980).